Here is a 484-residue protein sequence, read N- to C-terminus: Synaptic vesicle membrane protein VAT-1 homolog (484 aa).

Low complexity-rich tracts occupy residues 1-13 and 40-61; these read MSGE…QQNA and SAST…PAAE. Disordered stretches follow at residues 1 to 65 and 402 to 484; these read MSGE…KAPE and IGKI…KEEN. Basic and acidic residues predominate over residues 411-484; it reads PMKEEEKKEE…KKEEVKKEEN (74 aa).

It belongs to the zinc-containing alcohol dehydrogenase family. Quinone oxidoreductase subfamily.

The polypeptide is Synaptic vesicle membrane protein VAT-1 homolog (Danio rerio (Zebrafish)).